We begin with the raw amino-acid sequence, 140 residues long: Cytochrome c-type biogenesis protein CcmE (140 aa).

Residues 1–7 are Cytoplasmic-facing; that stretch reads MKRKHKR. Residues 8–28 form a helical; Signal-anchor for type II membrane protein membrane-spanning segment; sequence LLFVLASFCAAGCALLFILSE. The Periplasmic segment spans residues 29 to 140; sequence LRESVSFFYT…TAPKSSPEPK (112 aa). 2 residues coordinate heme: His-121 and Tyr-125.

This sequence belongs to the CcmE/CycJ family.

Its subcellular location is the cell inner membrane. Heme chaperone required for the biogenesis of c-type cytochromes. Transiently binds heme delivered by CcmC and transfers the heme to apo-cytochromes in a process facilitated by CcmF and CcmH. The chain is Cytochrome c-type biogenesis protein CcmE from Anaplasma marginale (strain St. Maries).